Consider the following 129-residue polypeptide: Protein FYV12 (129 aa).

A glycan (N-linked (GlcNAc...) asparagine) is linked at Asn-91. Residues 109–128 (LMTTFLLYVLYVCIYISAFI) form a helical membrane-spanning segment.

It is found in the membrane. In terms of biological role, involved in K1 killer toxin resistance. This chain is Protein FYV12 (FYV12), found in Saccharomyces cerevisiae (strain ATCC 204508 / S288c) (Baker's yeast).